The sequence spans 488 residues: MTFNNKTIEELHNLLVSKEISATELTQATLENIKSREEALNSFVTIAEEQALVQAKAIDEAGIDADNVLSGIPLAVKDNISTDGILTTAASKMLYNYEPIFDATAVANAKTKGMIVVGKTNMDEFAMGGSGETSHYGATKNAWDHSKVPGGSSSGSAAAVASGQVRLSLGSDTGGSIRQPAAFNGIVGLKPTYGTVSRFGLIAFGSSLDQIGPFAPTVKENALLLNAIASEDAKDSTSAPVRIADFTSKIGQDIKGMKIALPKEYLGEGIDPEVKETILNAAKHFEKLGAIVEEVSLPHSKYGVAVYYIIASSEASSNLQRFDGIRYGYRAEDATNLDEIYVNSRSQGFGEEVKRRIMLGTFSLSSGYYDAYYKKAGQVRTLIIQDFEKVFADYDLILGPTAPSVAYDLNSLNHDPVAMYLADLLTIPVNLAGLPGISIPAGFSQGLPVGLQLIGPKYSEETIYQAAAAFEATTDYHKQQPVIFGGDN.

Active-site charge relay system residues include Lys-77 and Ser-152. Ser-176 functions as the Acyl-ester intermediate in the catalytic mechanism.

Belongs to the amidase family. GatA subfamily. In terms of assembly, heterotrimer of A, B and C subunits.

The catalysed reaction is L-glutamyl-tRNA(Gln) + L-glutamine + ATP + H2O = L-glutaminyl-tRNA(Gln) + L-glutamate + ADP + phosphate + H(+). Functionally, allows the formation of correctly charged Gln-tRNA(Gln) through the transamidation of misacylated Glu-tRNA(Gln) in organisms which lack glutaminyl-tRNA synthetase. The reaction takes place in the presence of glutamine and ATP through an activated gamma-phospho-Glu-tRNA(Gln). This Streptococcus pneumoniae (strain Hungary19A-6) protein is Glutamyl-tRNA(Gln) amidotransferase subunit A.